Reading from the N-terminus, the 275-residue chain is Nitrogenase iron protein 1 (275 aa).

9-16 (GKGGIGKS) serves as a coordination point for ATP. Cys98 contacts [4Fe-4S] cluster. At Arg101 the chain carries ADP-ribosylarginine; by dinitrogenase reductase ADP-ribosyltransferase. Cys132 contacts [4Fe-4S] cluster.

Belongs to the NifH/BchL/ChlL family. Homodimer. The cofactor is [4Fe-4S] cluster. Post-translationally, the reversible ADP-ribosylation of Arg-101 inactivates the nitrogenase reductase and regulates nitrogenase activity.

The catalysed reaction is N2 + 8 reduced [2Fe-2S]-[ferredoxin] + 16 ATP + 16 H2O = H2 + 8 oxidized [2Fe-2S]-[ferredoxin] + 2 NH4(+) + 16 ADP + 16 phosphate + 6 H(+). Its function is as follows. The key enzymatic reactions in nitrogen fixation are catalyzed by the nitrogenase complex, which has 2 components: the iron protein and the molybdenum-iron protein. The chain is Nitrogenase iron protein 1 (nifH1) from Methanobacterium ivanovii.